We begin with the raw amino-acid sequence, 762 residues long: N,N-dimethylformamidase beta subunit (762 aa).

As to quaternary structure, heterotetramer of two DmfA1 (alpha) and two DmfA2 (beta) subunits.

It carries out the reaction N,N-dimethylformamide + H2O = dimethylamine + formate. Hydrolyzes N,N-dimethylformamide, and to a lesser extent N,N-dimethylacetamide and N,N-diethylacetamide. Has no activity against the substituted amides N-methylformamide, N-ethylformamide, N-ethylformamide and N-methylacetamide or the unsubstituted amides formamide, nicotinamide, acetoamide, benzamide, acetamide and acrylamide. This chain is N,N-dimethylformamidase beta subunit, found in Paracoccus aminophilus.